A 542-amino-acid polypeptide reads, in one-letter code: CTP synthase (542 aa).

An amidoligase domain region spans residues Met-1–Leu-266. Position 14 (Ser-14) interacts with CTP. Ser-14 serves as a coordination point for UTP. ATP is bound by residues Ser-15–Ile-20 and Asp-72. Mg(2+)-binding residues include Asp-72 and Glu-140. CTP-binding positions include Asp-147–Glu-149, Lys-187–Gln-192, and Lys-223. UTP contacts are provided by residues Lys-187 to Gln-192 and Lys-223. Residue Lys-239–Val-241 coordinates ATP. The Glutamine amidotransferase type-1 domain occupies Thr-291–Lys-542. Gly-352 is a binding site for L-glutamine. Cys-379 acts as the Nucleophile; for glutamine hydrolysis in catalysis. L-glutamine is bound by residues Leu-380–Gln-383, Glu-403, and Arg-470. Catalysis depends on residues His-515 and Glu-517.

The protein belongs to the CTP synthase family. As to quaternary structure, homotetramer.

It carries out the reaction UTP + L-glutamine + ATP + H2O = CTP + L-glutamate + ADP + phosphate + 2 H(+). The enzyme catalyses L-glutamine + H2O = L-glutamate + NH4(+). The catalysed reaction is UTP + NH4(+) + ATP = CTP + ADP + phosphate + 2 H(+). Its pathway is pyrimidine metabolism; CTP biosynthesis via de novo pathway; CTP from UDP: step 2/2. Allosterically activated by GTP, when glutamine is the substrate; GTP has no effect on the reaction when ammonia is the substrate. The allosteric effector GTP functions by stabilizing the protein conformation that binds the tetrahedral intermediate(s) formed during glutamine hydrolysis. Inhibited by the product CTP, via allosteric rather than competitive inhibition. Its function is as follows. Catalyzes the ATP-dependent amination of UTP to CTP with either L-glutamine or ammonia as the source of nitrogen. Regulates intracellular CTP levels through interactions with the four ribonucleotide triphosphates. In Actinobacillus succinogenes (strain ATCC 55618 / DSM 22257 / CCUG 43843 / 130Z), this protein is CTP synthase.